Consider the following 374-residue polypeptide: Alanine racemase (374 aa).

Catalysis depends on Lys-44, which acts as the Proton acceptor; specific for D-alanine. At Lys-44 the chain carries N6-(pyridoxal phosphate)lysine. Arg-139 lines the substrate pocket. Residue Tyr-269 is the Proton acceptor; specific for L-alanine of the active site. Met-317 is a substrate binding site.

This sequence belongs to the alanine racemase family. The cofactor is pyridoxal 5'-phosphate.

It catalyses the reaction L-alanine = D-alanine. Its pathway is amino-acid biosynthesis; D-alanine biosynthesis; D-alanine from L-alanine: step 1/1. Catalyzes the interconversion of L-alanine and D-alanine. May also act on other amino acids. The sequence is that of Alanine racemase (alr) from Bordetella avium (strain 197N).